The sequence spans 1060 residues: Carbamoyl phosphate synthase large chain (1060 aa).

Residues 1-401 form a carboxyphosphate synthetic domain region; the sequence is MPKRTDIKKI…SLLKAVRSLE (401 aa). Residues arginine 129, arginine 169, glycine 175, glycine 176, lysine 208, isoleucine 210, glutamate 215, glycine 241, isoleucine 242, histidine 243, glutamine 284, and glutamate 298 each contribute to the ATP site. The ATP-grasp 1 domain maps to 133–327; the sequence is KQLMEELEQP…IAKLAAKIAV (195 aa). Mg(2+) contacts are provided by glutamine 284, glutamate 298, and asparagine 300. Residues glutamine 284, glutamate 298, and asparagine 300 each contribute to the Mn(2+) site. The tract at residues 402-546 is oligomerization domain; it reads IGAYHNELAE…YSTYEVENES (145 aa). A carbamoyl phosphate synthetic domain region spans residues 547-929; the sequence is NVSKKPSVLV…ALYKAFEASG (383 aa). Positions 671–861 constitute an ATP-grasp 2 domain; that stretch reads EQALQELAIP…MAQVATKAIL (191 aa). Arginine 707, serine 746, leucine 748, glutamate 752, glycine 777, valine 778, histidine 779, serine 780, glutamine 820, and glutamate 832 together coordinate ATP. Positions 820, 832, and 834 each coordinate Mg(2+). Mn(2+) is bound by residues glutamine 820, glutamate 832, and asparagine 834. The MGS-like domain maps to 930–1060; the sequence is LHLPSYGAVL…ESRAFTTEAI (131 aa). Positions 930 to 1060 are allosteric domain; that stretch reads LHLPSYGAVL…ESRAFTTEAI (131 aa).

It belongs to the CarB family. Composed of two chains; the small (or glutamine) chain promotes the hydrolysis of glutamine to ammonia, which is used by the large (or ammonia) chain to synthesize carbamoyl phosphate. Tetramer of heterodimers (alpha,beta)4. It depends on Mg(2+) as a cofactor. The cofactor is Mn(2+).

It carries out the reaction hydrogencarbonate + L-glutamine + 2 ATP + H2O = carbamoyl phosphate + L-glutamate + 2 ADP + phosphate + 2 H(+). The enzyme catalyses hydrogencarbonate + NH4(+) + 2 ATP = carbamoyl phosphate + 2 ADP + phosphate + 2 H(+). It functions in the pathway amino-acid biosynthesis; L-arginine biosynthesis; carbamoyl phosphate from bicarbonate: step 1/1. It participates in pyrimidine metabolism; UMP biosynthesis via de novo pathway; (S)-dihydroorotate from bicarbonate: step 1/3. Functionally, large subunit of the glutamine-dependent carbamoyl phosphate synthetase (CPSase). CPSase catalyzes the formation of carbamoyl phosphate from the ammonia moiety of glutamine, carbonate, and phosphate donated by ATP, constituting the first step of 2 biosynthetic pathways, one leading to arginine and/or urea and the other to pyrimidine nucleotides. The large subunit (synthetase) binds the substrates ammonia (free or transferred from glutamine from the small subunit), hydrogencarbonate and ATP and carries out an ATP-coupled ligase reaction, activating hydrogencarbonate by forming carboxy phosphate which reacts with ammonia to form carbamoyl phosphate. The chain is Carbamoyl phosphate synthase large chain from Enterococcus faecalis (strain ATCC 700802 / V583).